Consider the following 278-residue polypeptide: ATP synthase subunit a (278 aa).

6 helical membrane passes run 43 to 63 (TWHI…LWIF), 104 to 124 (IAPL…MDMI), 148 to 168 (DVNI…FYSI), 191 to 211 (IPVN…SLAL), 222 to 242 (LIFI…TLGV), and 249 to 269 (LIFH…LTIV).

This sequence belongs to the ATPase A chain family. F-type ATPases have 2 components, CF(1) - the catalytic core - and CF(0) - the membrane proton channel. CF(1) has five subunits: alpha(3), beta(3), gamma(1), delta(1), epsilon(1). CF(0) has three main subunits: a(1), b(2) and c(9-12). The alpha and beta chains form an alternating ring which encloses part of the gamma chain. CF(1) is attached to CF(0) by a central stalk formed by the gamma and epsilon chains, while a peripheral stalk is formed by the delta and b chains.

The protein resides in the cell inner membrane. Its function is as follows. Key component of the proton channel; it plays a direct role in the translocation of protons across the membrane. This is ATP synthase subunit a from Shewanella baltica (strain OS185).